The primary structure comprises 215 residues: Ribonuclease T (215 aa).

Positions 20-194 constitute an Exonuclease domain; that stretch reads VVIDVETAGF…YDTERTAVLF (175 aa). Mg(2+) is bound by residues aspartate 23, glutamate 25, histidine 181, and aspartate 186. Catalysis depends on histidine 181, which acts as the Proton donor/acceptor.

Belongs to the RNase T family. Homodimer. Requires Mg(2+) as cofactor.

Trims short 3' overhangs of a variety of RNA species, leaving a one or two nucleotide 3' overhang. Responsible for the end-turnover of tRNA: specifically removes the terminal AMP residue from uncharged tRNA (tRNA-C-C-A). Also appears to be involved in tRNA biosynthesis. The chain is Ribonuclease T from Salmonella paratyphi A (strain ATCC 9150 / SARB42).